Reading from the N-terminus, the 626-residue chain is Putative ankyrin repeat protein R837 (626 aa).

ANK repeat units follow at residues 42-72 (EYFNLIDFIIETKSMEVLKYIYQSKTNGLIR), 80-109 (TLNTSLLTSCQNGNILLVKFFIEKGANHRY), 110-139 (SEDKPLGIAAANGHSDIVEYLVNGGANIKS), 140-169 (RNNYALRFAVKNGHYNMVKFLIEQGVDITV), 171-199 (DYEVFYTSCEYGHYEIFVYLMKNINDIKK), 201-230 (NKKRLLKKAFKGGSVKIVHYIFNDILDVYR), 242-269 (KNYKLLNIIGKYGNHDILEYLHNRYQLS), 270-298 (DTNNIAQVAALYGHFRIVKFLLDKYLHEL), 299-328 (NLNQLIISACDNGSIKMVKFLIEKGIDINT), 330-358 (GNSCLSHAILSGNTDLLHYLTNIGCRLTS), 393-416 (TIMSTSMYCGIIKLVKYFVDKSSL), 417-446 (DYESYICGIISNGHVNIIKYLLNQNKITKQ), 452-479 (INNSVILTIIQYGHIDMLKYLVSLGINI), 480-509 (CINYALDRAVSYGHLNIVEYLLELGHNINE), 510-539 (FGDLPLRSATIANNINMVKYLVSQGANIYI), 540-569 (IKDNPIYLASIHGHVKLVKYFIDLGSDYHK), 570-599 (KNELPLYVAIINNNLDVVKCLVEHGCKTKT), and 601-626 (FFDPIETAMEYYNNEIVEYLQNNEIK).

This is Putative ankyrin repeat protein R837 from Acanthamoeba polyphaga (Amoeba).